Consider the following 61-residue polypeptide: Small ribosomal subunit protein uS14 (61 aa).

The Zn(2+) site is built by cysteine 24, cysteine 27, cysteine 40, and cysteine 43.

It belongs to the universal ribosomal protein uS14 family. Zinc-binding uS14 subfamily. As to quaternary structure, part of the 30S ribosomal subunit. Contacts proteins S3 and S10. The cofactor is Zn(2+).

Functionally, binds 16S rRNA, required for the assembly of 30S particles and may also be responsible for determining the conformation of the 16S rRNA at the A site. The chain is Small ribosomal subunit protein uS14 from Geobacillus thermodenitrificans (strain NG80-2).